Reading from the N-terminus, the 418-residue chain is Actin-related protein 3 (418 aa).

An N-acetylalanine modification is found at alanine 2. Residues lysine 240, lysine 244, lysine 251, and lysine 254 each carry the N6-acetyllysine modification.

The protein belongs to the actin family. ARP3 subfamily. In terms of assembly, component of the Arp2/3 complex composed of ACTR2/ARP2, ACTR3/ARP3, ARPC1B/p41-ARC, ARPC2/p34-ARC, ARPC3/p21-ARC, ARPC4/p20-ARC and ARPC5/p16-ARC. Interacts with WHDC1. Interacts weakly with MEFV. Interacts with AVIL.

Its subcellular location is the cytoplasm. The protein localises to the cytoskeleton. The protein resides in the cell projection. It localises to the nucleus. Functionally, ATP-binding component of the Arp2/3 complex, a multiprotein complex that mediates actin polymerization upon stimulation by nucleation-promoting factor (NPF). The Arp2/3 complex mediates the formation of branched actin networks in the cytoplasm, providing the force for cell motility. Seems to contact the pointed end of the daughter actin filament. In podocytes, required for the formation of lamellipodia downstream of AVIL and PLCE1 regulation. In addition to its role in the cytoplasmic cytoskeleton, the Arp2/3 complex also promotes actin polymerization in the nucleus, thereby regulating gene transcription and repair of damaged DNA. The Arp2/3 complex promotes homologous recombination (HR) repair in response to DNA damage by promoting nuclear actin polymerization, leading to drive motility of double-strand breaks (DSBs). Plays a role in ciliogenesis. This Bos taurus (Bovine) protein is Actin-related protein 3 (ACTR3).